Here is a 705-residue protein sequence, read N- to C-terminus: Glycogen [starch] synthase isoform 2 (705 aa).

Arginine 20 contributes to the UDP binding site. A Phosphoserine modification is found at serine 159. Residues histidine 193 and arginine 199 each contribute to the UDP-alpha-D-glucose site. Positions 280, 281, 283, 286, and 290 each coordinate alpha-D-glucose 6-phosphate. A UDP-binding site is contributed by arginine 320. A UDP-alpha-D-glucose-binding site is contributed by arginine 320. Phosphoserine occurs at positions 363 and 467. Position 500 (histidine 500) interacts with alpha-D-glucose 6-phosphate. Positions 509, 511, and 512 each coordinate UDP-alpha-D-glucose. Position 514 (threonine 514) interacts with UDP. Positions 583 and 587 each coordinate alpha-D-glucose 6-phosphate. A Phosphoserine modification is found at serine 651. The residue at position 655 (serine 655) is a Phosphoserine; by PHO85. Phosphoserine; by PKA occurs at positions 661 and 663. At threonine 668 the chain carries Phosphothreonine; by PHO85. The interval 686–705 is disordered; it reads SLGVNPAADDDDDGPYADDS. The segment covering 693–705 has biased composition (acidic residues); sequence ADDDDDGPYADDS.

Belongs to the glycosyltransferase 3 family. As to quaternary structure, interacts with PCL10. In terms of processing, phosphorylated by the cyclin-CDK PCL10-PHO85. Phosphorylation causes inactivation of enzyme.

The protein localises to the cytoplasm. It localises to the cytosol. The catalysed reaction is [(1-&gt;4)-alpha-D-glucosyl](n) + UDP-alpha-D-glucose = [(1-&gt;4)-alpha-D-glucosyl](n+1) + UDP + H(+). It participates in glycan biosynthesis; glycogen biosynthesis. With respect to regulation, allosteric activation by glucose-6-phosphate, and phosphorylation by a cAMP-dependent kinase. Glycogen synthase participates in the glycogen biosynthetic process along with glycogenin and glycogen branching enzyme. Extends the primer composed of a few glucose units formed by glycogenin by adding new glucose units to it. In this context, glycogen synthase transfers the glycosyl residue from UDP-Glc to the non-reducing end of alpha-1,4-glucan. The sequence is that of Glycogen [starch] synthase isoform 2 (GSY2) from Saccharomyces cerevisiae (strain ATCC 204508 / S288c) (Baker's yeast).